The following is a 211-amino-acid chain: Large ribosomal subunit protein eL13 (211 aa).

N6-acetyllysine is present on lysine 16. Serine 77 and serine 106 each carry phosphoserine. Residues lysine 123 and lysine 145 each participate in a glycyl lysine isopeptide (Lys-Gly) (interchain with G-Cter in SUMO2) cross-link. Lysine 174 participates in a covalent cross-link: Glycyl lysine isopeptide (Lys-Gly) (interchain with G-Cter in SUMO1); alternate. Residues lysine 174 and lysine 177 each participate in a glycyl lysine isopeptide (Lys-Gly) (interchain with G-Cter in SUMO2); alternate cross-link. Lysine 177 is modified (N6-acetyllysine; alternate).

It belongs to the eukaryotic ribosomal protein eL13 family. Component of the 60S large ribosomal subunit (LSU).

The protein resides in the cytoplasm. In terms of biological role, component of the ribosome, a large ribonucleoprotein complex responsible for the synthesis of proteins in the cell. The small ribosomal subunit (SSU) binds messenger RNAs (mRNAs) and translates the encoded message by selecting cognate aminoacyl-transfer RNA (tRNA) molecules. The large subunit (LSU) contains the ribosomal catalytic site termed the peptidyl transferase center (PTC), which catalyzes the formation of peptide bonds, thereby polymerizing the amino acids delivered by tRNAs into a polypeptide chain. The nascent polypeptides leave the ribosome through a tunnel in the LSU and interact with protein factors that function in enzymatic processing, targeting, and the membrane insertion of nascent chains at the exit of the ribosomal tunnel. As part of the LSU, it is probably required for its formation and the maturation of rRNAs. Plays a role in bone development. The sequence is that of Large ribosomal subunit protein eL13 (RPL13) from Oryctolagus cuniculus (Rabbit).